Reading from the N-terminus, the 329-residue chain is Probable alpha-1,2-galactosyltransferase gmh1 (329 aa).

Residues 1–14 (MLSFFTKNTLTKRK) are Cytoplasmic-facing. The helical; Signal-anchor for type II membrane protein transmembrane segment at 15-35 (LIMLALAIVFTFFAFGLYFIP) threads the bilayer. Topologically, residues 36-329 (HDEISVFDFK…LWTKYKDKII (294 aa)) are lumenal. N-linked (GlcNAc...) asparagine glycans are attached at residues N127 and N169.

This sequence belongs to the glycosyltransferase 34 family.

The protein resides in the golgi apparatus membrane. In Schizosaccharomyces pombe (strain 972 / ATCC 24843) (Fission yeast), this protein is Probable alpha-1,2-galactosyltransferase gmh1 (gmh1).